Consider the following 1144-residue polypeptide: Ribonucleoside-diphosphate reductase large subunit (1144 aa).

The disordered stretch occupies residues 1–33 (MANRPAASALAGARSPSERQEPREPEVAPPGGD). Residues 16 to 26 (PSERQEPREPE) show a composition bias toward basic and acidic residues. The short motif at 55–75 (AYRISDSSFVQCGSNCSMIID) is the RIP homotypic interaction motif (RHIM) element. Positions 118 to 324 (SGPSATTSVG…TDPGYPVPLE (207 aa)) are disordered. Positions 119–132 (GPSATTSVGTQTSG) are enriched in polar residues. Positions 141 to 159 (TPEPQGPQAVPPPPPPPFP) are enriched in pro residues. The segment covering 164-179 (CCARRDARGGAEKDVG) has biased composition (basic and acidic residues). Over residues 192–204 (SETEDSDSSDEDT) the composition is skewed to acidic residues. Composition is skewed to low complexity over residues 205-216 (GSGSETLSRSSS) and 279-305 (GSATDPRASADSDSAAHAAAPQADVAP). Substrate is bound by residues Thr573, 588-589 (SC), Gly619, 798-802 (NLCTE), and 975-979 (PTAAS). Cys589 and Cys815 are disulfide-bonded. The active-site Proton acceptor is Asn798. The active-site Cysteine radical intermediate is Cys800. Residue Glu802 is the Proton acceptor of the active site.

The protein belongs to the ribonucleoside diphosphate reductase large chain family. In terms of assembly, heterotetramer composed of a homodimer of the large subunit (R1) and a homodimer of the small subunit (R2). Larger multisubunit protein complex are also active, composed of (R1)n(R2)n. May self-assemble (via RIP homotypic interaction motif/RHIM) into homomeric fibrillar amyloid structures. Interacts (via RHIM) with human RIPK1 (via RHIM). Interacts (via RHIM) with human RIPK3 (via RHIM). May interact (via RHIM) with human ZBP1 (via RHIM). Interacts (via C-terminus) with host CASP8.

The enzyme catalyses a 2'-deoxyribonucleoside 5'-diphosphate + [thioredoxin]-disulfide + H2O = a ribonucleoside 5'-diphosphate + [thioredoxin]-dithiol. Its function is as follows. Ribonucleoside-diphosphate reductase holoenzyme that provides the precursors necessary for viral DNA synthesis. Allows virus growth in non-dividing cells, as well as reactivation from latency in infected hosts. Catalyzes the biosynthesis of deoxyribonucleotides from the corresponding ribonucleotides. The N-terminal region confers antiapoptotic activity in differentiated cells such as neurons and is important for viral reactivation to increase neural survivability. Prevents host necroptosis by targeting host RIPK1 and RIPK3, thereby hampering the formation of necroptotic RIPK1-RIPK3 complexes. May form hetero-amyloid structures with host proteins RIPK3 or ZBP1, thereby preventing RIPK3- and ZBP1-mediated necroptosis. In addition, inhibits extrinsic apoptosis by targeting host CASP8. This is Ribonucleoside-diphosphate reductase large subunit from Homo sapiens (Human).